We begin with the raw amino-acid sequence, 319 residues long: Protease HtpX homolog (319 aa).

2 helical membrane passes run 6-26 (TAMLLAFMTALFMAVGYVIGG) and 28-48 (GGMMIALLMAAGMNFFSYWNS). H130 is a Zn(2+) binding site. Residue E131 is part of the active site. H134 contacts Zn(2+). A run of 2 helical transmembrane segments spans residues 145–165 (LTATLAGAISMLGNFAFFFGG) and 172–192 (PLGFVGVLIAMIVAPFAAMLV). E201 is a binding site for Zn(2+). The segment at 279-319 (REMSAGSTAPARPDNAVRRSRSVPKTGWGRGGSEPPKGPWS) is disordered.

Belongs to the peptidase M48B family. Zn(2+) serves as cofactor.

It is found in the cell inner membrane. The sequence is that of Protease HtpX homolog from Sinorhizobium fredii (strain NBRC 101917 / NGR234).